A 362-amino-acid polypeptide reads, in one-letter code: GMP reductase (362 aa).

Residues 26 to 27 (SR), lysine 78, 129 to 131 (DVA), and 180 to 181 (IG) contribute to the NADP(+) site. Glycine 181, glycine 183, and cysteine 186 together coordinate K(+). Residue cysteine 186 is the Thioimidate intermediate of the active site. Threonine 188 functions as the Proton donor/acceptor in the catalytic mechanism. Arginine 189 contributes to the K(+) binding site. GMP contacts are provided by residues 219-221 (DGG), 242-243 (GG), 268-270 (GMS), and 286-290 (RASEG). NADP(+) contacts are provided by residues methionine 269, 285–286 (YR), and 314–317 (STCT).

Belongs to the IMPDH/GMPR family.

It carries out the reaction IMP + NH4(+) + NADP(+) = GMP + NADPH + 2 H(+). Its function is as follows. Catalyzes the irreversible NADPH-dependent deamination of GMP to IMP. It functions in the conversion of nucleobase, nucleoside and nucleotide derivatives of G to A nucleotides, and in maintaining the intracellular balance of A and G nucleotides. In Phytophthora infestans (Potato late blight agent), this protein is GMP reductase.